A 90-amino-acid polypeptide reads, in one-letter code: Small ribosomal subunit protein uS15c (90 aa).

Belongs to the universal ribosomal protein uS15 family. In terms of assembly, part of the 30S ribosomal subunit.

The protein resides in the plastid. Its subcellular location is the chloroplast. In Manihot esculenta (Cassava), this protein is Small ribosomal subunit protein uS15c (rps15).